The sequence spans 265 residues: Silaffin-1 (265 aa).

The first 19 residues, 1-19, serve as a signal peptide directing secretion; that stretch reads MKLTAIFPLLFTAVGYCAA. The propeptide at 20–107 is acidic; that stretch reads QSIADLAAAN…DSEEEELRIL (88 aa). The tract at residues 37 to 106 is disordered; that stretch reads SAQLISADSS…EDSEEEELRI (70 aa). Residues 51-90 show a composition bias toward low complexity; it reads DSSVESVDAASSDVSGSSVESVDVSGSSLESVDVSGSSLE. A compositionally biased stretch (acidic residues) spans 91-103; sequence SVDDSSEDSEEEE. The R1; atypical repeat unit spans residues 108–140; that stretch reads SSKKSGSYYSYGTKKSGSYSGYSTKKSASRRIL. The segment at 108 to 257 is 7 X 19 AA repeat of S-S-K-K-S-G-S-Y-S-G-S-K-G-S-K-R-R-[IL]-L; sequence SSKKSGSYYS…GSKGSKRRIL (150 aa). Lys-110 bears the N6-poly(methylaminopropyl)lysine mark. Lys-111 bears the N6,N6-dimethyllysine mark. The span at 122–133 shows a compositional bias: low complexity; it reads KSGSYSGYSTKK. Positions 122–265 are disordered; that stretch reads KSGSYSGYST…ILSGGLRGSM (144 aa). The propeptide occupies 137-140; the sequence is RRIL. One copy of the R2; atypical repeat lies at 141 to 162; it reads SSKKSGSYSGYSTKKSGSRRIL. Residues 142–155 are compositionally biased toward low complexity; sequence SKKSGSYSGYSTKK. Position 143 is an N6-poly(methylaminopropyl)lysine (Lys-143). Lys-144 carries the post-translational modification N6,N6-dimethyllysine. Lys-154 is subject to N6-poly(methylaminopropyl)lysine. Residue Lys-155 is modified to N6,N6-dimethyllysine. A propeptide spanning residues 159 to 162 is cleaved from the precursor; sequence RRIL. 2 positions are modified to phosphoserine: Ser-163 and Ser-164. The R3 repeat unit spans residues 163 to 181; the sequence is SSKKSGSYSGSKGSKRRIL. The span at 164 to 174 shows a compositional bias: low complexity; the sequence is SKKSGSYSGSK. Lys-165 is modified (N6-poly(methylaminopropyl)lysine). Lys-166 is modified (N6,N6-dimethyllysine). Phosphoserine is present on residues Ser-167, Ser-169, Ser-171, and Ser-173. An N6,N6,N6-trimethyl-5-hydroxylysine modification is found at Lys-174. Ser-176 carries the post-translational modification Phosphoserine. Lys-177 is modified (N6-poly(methylaminopropyl)lysine). A propeptide spanning residues 178 to 181 is cleaved from the precursor; the sequence is RRIL. 2 positions are modified to phosphoserine: Ser-182 and Ser-183. The R4 repeat unit spans residues 182–200; the sequence is SSKKSGSYSGSKGSKRRNL. Residues 183 to 193 show a composition bias toward low complexity; it reads SKKSGSYSGSK. Lys-184 carries the post-translational modification N6-poly(methylaminopropyl)lysine. Position 185 is an N6,N6-dimethyllysine (Lys-185). A phosphoserine mark is found at Ser-186, Ser-188, Ser-190, and Ser-192. Lys-193 is subject to N6,N6,N6-trimethyl-5-hydroxylysine. Ser-195 is subject to Phosphoserine. N6-poly(methylaminopropyl)lysine is present on Lys-196. The propeptide occupies 197–200; sequence RRNL. Ser-201 and Ser-202 each carry phosphoserine. One copy of the R5 repeat lies at 201–219; it reads SSKKSGSYSGSKGSKRRIL. Residues 202-212 are compositionally biased toward low complexity; sequence SKKSGSYSGSK. Lys-203 is subject to N6-poly(methylaminopropyl)lysine. Lys-204 is modified (N6,N6-dimethyllysine). Ser-205, Ser-207, Ser-209, and Ser-211 each carry phosphoserine. Lys-212 bears the N6,N6,N6-trimethyl-5-hydroxylysine mark. Ser-214 is modified (phosphoserine). Position 215 is an N6-poly(methylaminopropyl)lysine (Lys-215). Residues 216–219 constitute a propeptide that is removed on maturation; that stretch reads RRIL. Ser-220 and Ser-221 each carry phosphoserine. Residues 220 to 238 form an R6 repeat; it reads SSKKSGSYSGSKGSKRRNL. Residues 221–231 are compositionally biased toward low complexity; that stretch reads SKKSGSYSGSK. Lys-222 carries the N6-poly(methylaminopropyl)lysine modification. Lys-223 bears the N6,N6-dimethyllysine mark. Residues Ser-224, Ser-226, Ser-228, and Ser-230 each carry the phosphoserine modification. Lys-231 is subject to N6,N6,N6-trimethyl-5-hydroxylysine. Residue Ser-233 is modified to Phosphoserine. Lys-234 carries the post-translational modification N6-poly(methylaminopropyl)lysine. Positions 235-238 are excised as a propeptide; sequence RRNL. Phosphoserine occurs at positions 239 and 240. The stretch at 239–257 is one R7 repeat; the sequence is SSKKSGSYSGSKGSKRRIL. Low complexity predominate over residues 240–250; it reads SKKSGSYSGSK. Lys-241 is modified (N6-poly(methylaminopropyl)lysine). Lys-242 bears the N6,N6-dimethyllysine mark. Ser-243, Ser-245, Ser-247, and Ser-249 each carry phosphoserine. The residue at position 250 (Lys-250) is an N6,N6,N6-trimethyl-5-hydroxylysine. At Ser-252 the chain carries Phosphoserine. Lys-253 carries the N6-poly(methylaminopropyl)lysine modification. Positions 254 to 265 are excised as a propeptide; that stretch reads RRILSGGLRGSM.

Silaffin-1A peptides form large aggregates via electrostatic interactions due to intermolecular interactions between the negatively charged phosphate groups and the polyamine moieties. In terms of processing, N6-polymethylaminopropylated. Two lysine residues of each peptide bears 6 to 11 repeats of methyl-propylamine, which gives a possible template for nucleation, and may also control the silica colloid size within the silica deposition vesicle (SDV). Phosphorylated. All serine residues of the Silaffin-1A1 peptide are phosphorylated. Only minor amounts of the Silaffin-1A2 peptide are phosphorylated. Phosphorylation is essential for the activity. It may represent a source of anions required for silica formation of diatoms.

Catalyzes the polymerization of silica spheres from a silicilic acid solution. It therefore plays a central role in the formation of silica cell wall of diatoms. The polypeptide is Silaffin-1 (SIL1) (Cylindrotheca fusiformis (Marine diatom)).